A 941-amino-acid polypeptide reads, in one-letter code: Isoleucine--tRNA ligase (941 aa).

Positions 58 to 68 (PYANGDIHIGH) match the 'HIGH' region motif. E563 contacts L-isoleucyl-5'-AMP. The 'KMSKS' region signature appears at 604-608 (KMSKS). K607 is a binding site for ATP. Zn(2+) is bound by residues C904, C907, C924, and C927.

It belongs to the class-I aminoacyl-tRNA synthetase family. IleS type 1 subfamily. As to quaternary structure, monomer. It depends on Zn(2+) as a cofactor.

The protein localises to the cytoplasm. The catalysed reaction is tRNA(Ile) + L-isoleucine + ATP = L-isoleucyl-tRNA(Ile) + AMP + diphosphate. Functionally, catalyzes the attachment of isoleucine to tRNA(Ile). As IleRS can inadvertently accommodate and process structurally similar amino acids such as valine, to avoid such errors it has two additional distinct tRNA(Ile)-dependent editing activities. One activity is designated as 'pretransfer' editing and involves the hydrolysis of activated Val-AMP. The other activity is designated 'posttransfer' editing and involves deacylation of mischarged Val-tRNA(Ile). The sequence is that of Isoleucine--tRNA ligase from Halorhodospira halophila (strain DSM 244 / SL1) (Ectothiorhodospira halophila (strain DSM 244 / SL1)).